A 116-amino-acid polypeptide reads, in one-letter code: uncharacterized protein (116 aa).

The region spanning 5–113 is the VOC domain; that stretch reads EVKMVVLSTE…TGNGLVFYSP (109 aa). Lysine 76 participates in a covalent cross-link: Isoglutamyl lysine isopeptide (Lys-Gln) (interchain with Q-Cter in protein Pup).

This is an uncharacterized protein from Mycolicibacterium smegmatis (strain ATCC 700084 / mc(2)155) (Mycobacterium smegmatis).